The primary structure comprises 260 residues: Large ribosomal subunit protein uL2 (260 aa).

Residues 208–230 (EHPHGGGNHQHIGHPSTVRRDAS) form a disordered region.

It belongs to the universal ribosomal protein uL2 family.

The protein resides in the cytoplasm. In Caenorhabditis elegans, this protein is Large ribosomal subunit protein uL2.